The following is an 862-amino-acid chain: Bifunctional uridylyltransferase/uridylyl-removing enzyme (862 aa).

Residues 1-328 (MSTAAIPTDA…FPRRAGAAIV (328 aa)) are uridylyltransferase. Residues 329–685 (INERFQAVRE…ARVSDADQGV (357 aa)) form a uridylyl-removing region. Residues 447–563 (VDQHIMMVLR…GRFADTVGTE (117 aa)) form the HD domain. ACT domains are found at residues 686–765 (QVMV…DRPS) and 794–862 (ILSL…RLHI).

This sequence belongs to the GlnD family. It depends on Mg(2+) as a cofactor.

It carries out the reaction [protein-PII]-L-tyrosine + UTP = [protein-PII]-uridylyl-L-tyrosine + diphosphate. The catalysed reaction is [protein-PII]-uridylyl-L-tyrosine + H2O = [protein-PII]-L-tyrosine + UMP + H(+). With respect to regulation, uridylyltransferase (UTase) activity is inhibited by glutamine, while glutamine activates uridylyl-removing (UR) activity. Its function is as follows. Modifies, by uridylylation and deuridylylation, the PII regulatory proteins (GlnB and homologs), in response to the nitrogen status of the cell that GlnD senses through the glutamine level. Under low glutamine levels, catalyzes the conversion of the PII proteins and UTP to PII-UMP and PPi, while under higher glutamine levels, GlnD hydrolyzes PII-UMP to PII and UMP (deuridylylation). Thus, controls uridylylation state and activity of the PII proteins, and plays an important role in the regulation of nitrogen assimilation and metabolism. The protein is Bifunctional uridylyltransferase/uridylyl-removing enzyme of Aromatoleum aromaticum (strain DSM 19018 / LMG 30748 / EbN1) (Azoarcus sp. (strain EbN1)).